The primary structure comprises 122 residues: Protein FAM223A (122 aa).

Belongs to the FAM223 family.

This Homo sapiens (Human) protein is Protein FAM223A (FAM223A).